Here is a 909-residue protein sequence, read N- to C-terminus: Phosphoenolpyruvate carboxylase (909 aa).

Active-site residues include His-138 and Lys-572.

It belongs to the PEPCase type 1 family. It depends on Mg(2+) as a cofactor.

It carries out the reaction oxaloacetate + phosphate = phosphoenolpyruvate + hydrogencarbonate. Forms oxaloacetate, a four-carbon dicarboxylic acid source for the tricarboxylic acid cycle. The protein is Phosphoenolpyruvate carboxylase of Lactobacillus delbrueckii subsp. bulgaricus (strain ATCC 11842 / DSM 20081 / BCRC 10696 / JCM 1002 / NBRC 13953 / NCIMB 11778 / NCTC 12712 / WDCM 00102 / Lb 14).